A 134-amino-acid polypeptide reads, in one-letter code: Complexin-1 (134 aa).

2 disordered regions span residues 1–60 (MEFV…AERE) and 74–113 (KKEE…EEED). Residues 15–60 (DMGKMLGGDEEKDPDAAKKEEERQEALRQAEEERKAKYAKMEAERE) show a composition bias toward basic and acidic residues. The stretch at 29-69 (DAAKKEEERQEALRQAEEERKAKYAKMEAEREAVRQGIRDK) forms a coiled coil. The segment at 48-70 (RKAKYAKMEAEREAVRQGIRDKY) is interaction with the SNARE complex.

The protein belongs to the complexin/synaphin family. Binds to the SNARE core complex containing SNAP25, VAMP2 and STX1A. In terms of tissue distribution, nervous system. In hippocampus and cerebellum, expressed mainly by inhibitory neurons. Overexpressed in substantia nigra from patients with Parkinson disease.

Its subcellular location is the cytoplasm. The protein localises to the cytosol. The protein resides in the perikaryon. It is found in the presynapse. Positively regulates a late step in exocytosis of various cytoplasmic vesicles, such as synaptic vesicles and other secretory vesicles. Organizes the SNAREs into a cross-linked zigzag topology that, when interposed between the vesicle and plasma membranes, is incompatible with fusion, thereby preventing SNAREs from releasing neurotransmitters until an action potential arrives at the synapse. Also involved in glucose-induced secretion of insulin by pancreatic beta-cells. Essential for motor behavior. This Homo sapiens (Human) protein is Complexin-1 (CPLX1).